Here is a 107-residue protein sequence, read N- to C-terminus: MMKVLVVVALLVTLISYSSSEGIDDLEADELLSLMANEQTRKECIPKHHECTSDKHGCCRGNFFKYKCQCTTVVTQDGEQTERCFCGTPPHHKAAELVVGFGKKIFG.

The first 20 residues, 1–20, serve as a signal peptide directing secretion; sequence MMKVLVVVALLVTLISYSSS. Residues 21–41 constitute a propeptide that is removed on maturation; that stretch reads EGIDDLEADELLSLMANEQTR. Disulfide bonds link Cys44–Cys59, Cys51–Cys68, Cys58–Cys86, and Cys70–Cys84.

It belongs to the neurotoxin 19 (CSTX) family. 04 (U1-Lctx) subfamily. Expressed by the venom gland.

It is found in the secreted. The chain is U1-lycotoxin-Ls1t from Lycosa singoriensis (Wolf spider).